The primary structure comprises 135 residues: Protein PsiE homolog (135 aa).

4 consecutive transmembrane segments (helical) span residues 14-34, 54-74, 82-102, and 107-127; these read LQTILNIGLLALATILVIFLV, YQLIEGIVIYFLYFEFIALIV, HFPLRYFIYIGITAIIRLIIV, and PSDTLVYSAAILLLVVTLYLA.

Belongs to the PsiE family.

It localises to the cell inner membrane. This is Protein PsiE homolog from Pectobacterium atrosepticum (strain SCRI 1043 / ATCC BAA-672) (Erwinia carotovora subsp. atroseptica).